The following is a 252-amino-acid chain: 3-deoxy-manno-octulosonate cytidylyltransferase (252 aa).

It belongs to the KdsB family.

The protein localises to the cytoplasm. The catalysed reaction is 3-deoxy-alpha-D-manno-oct-2-ulosonate + CTP = CMP-3-deoxy-beta-D-manno-octulosonate + diphosphate. It functions in the pathway nucleotide-sugar biosynthesis; CMP-3-deoxy-D-manno-octulosonate biosynthesis; CMP-3-deoxy-D-manno-octulosonate from 3-deoxy-D-manno-octulosonate and CTP: step 1/1. Its pathway is bacterial outer membrane biogenesis; lipopolysaccharide biosynthesis. In terms of biological role, activates KDO (a required 8-carbon sugar) for incorporation into bacterial lipopolysaccharide in Gram-negative bacteria. The protein is 3-deoxy-manno-octulosonate cytidylyltransferase of Vibrio campbellii (strain ATCC BAA-1116).